Reading from the N-terminus, the 68-residue chain is Large ribosomal subunit protein bL35 (68 aa).

Belongs to the bacterial ribosomal protein bL35 family.

The chain is Large ribosomal subunit protein bL35 from Rickettsia typhi (strain ATCC VR-144 / Wilmington).